The primary structure comprises 126 residues: Profilin (126 aa).

The protein belongs to the profilin family. Occurs in many kinds of cells as a complex with monomeric actin in a 1:1 ratio.

The protein localises to the cytoplasm. It is found in the cytoskeleton. Functionally, binds to actin and affects the structure of the cytoskeleton. At high concentrations, profilin prevents the polymerization of actin, whereas it enhances it at low concentrations. By binding to PIP2, it inhibits the formation of IP3 and DG. The protein is Profilin of Branchiostoma belcheri (Amphioxus).